Reading from the N-terminus, the 327-residue chain is 2-oxoglutarate-dependent dioxygenase traH (327 aa).

The Fe2OG dioxygenase domain maps to 183 to 290 (TTDAAMFLKL…YAVPAFWHGD (108 aa)). His211, Asp213, and His270 together coordinate Fe cation. Arg280 is a binding site for 2-oxoglutarate.

It belongs to the iron/ascorbate-dependent oxidoreductase family. It depends on Fe(2+) as a cofactor.

Its pathway is secondary metabolite biosynthesis. Its function is as follows. 2-oxoglutarate-dependent dioxygenase; part of the tra gene cluster that produces terrestric acid. The clavatol biosynthesis cluster cla and the terrestric acid cluster tra are both involved in the production of peniphenones and penilactones. The non-reducing PKS claF is responsible for the formation of clavatol from successive condensations of 3 malonyl-CoA units, presumably with a simple acetyl-CoA starter unit, and 2 methylation steps. The esterase claE probably collaborates with claF by catalyzing the hydrolysis of ACP-bound acyl intermediates to free the ACP from stalled intermediates. The clavatol oxidase claD then converts clavatol to hydroxyclavatol. Spontaneous dehydration of hydroxyclavatol leads to the accumulation of the highly active ortho-quinone methide. On the other hand, the PKS-NRPS hybrid traA is involved in the formation of crustosic acid, with the help of traB and traD. The polyketide synthase module (PKS) of traA is responsible for the synthesis of the polyketide backbone via the condensation of an acetyl-CoA starter unit with 3 malonyl-CoA units. The downstream nonribosomal peptide synthetase (NRPS) module then amidates the carboxyl end of the polyketide with L-malic acid. Because traA lacks a designated enoylreductase (ER) domain, the required activity is provided the enoyl reductase traG. Crustosic acid undergoes decarboxylation and isomerization to the terrestric acid, catalyzed by the 2-oxoglutarate-dependent dioxygenase traH. Both acids are further converted to the 2 gamma-butyrolactones (R)-5-methyltetronic acid and (S)-5-carboxylmethyltetronic acid, with involvement of the cytochrome P450 monooxygenase claJ. Spontaneous addition of the methide to these gamma-butyrolactones leads to peniphenone D and penilactone D, which undergo again stereospecific attacking by methide to give penilactones A and B. This is 2-oxoglutarate-dependent dioxygenase traH from Penicillium crustosum (Blue mold fungus).